Consider the following 306-residue polypeptide: Pantothenate kinase (306 aa).

Gly91–Ser98 lines the ATP pocket.

The protein belongs to the prokaryotic pantothenate kinase family.

The protein localises to the cytoplasm. It catalyses the reaction (R)-pantothenate + ATP = (R)-4'-phosphopantothenate + ADP + H(+). It participates in cofactor biosynthesis; coenzyme A biosynthesis; CoA from (R)-pantothenate: step 1/5. This is Pantothenate kinase from Streptococcus pneumoniae (strain JJA).